Consider the following 350-residue polypeptide: DNA repair protein RAD51 homolog 2 (350 aa).

The interaction with RAD51C stretch occupies residues Met-1–Ser-75. Gly-108–Thr-115 is an ATP binding site.

Belongs to the RecA family. RAD51 subfamily. Part of the BCDX2 complex consisting of RAD51B, RAD51C, RAD51D and XRCC2; the complex has a ring-like structure arranged into a flat disc around a central channel. The BCDX2 subcomplex RAD51B:RAD51C interacts with RAD51. Interacts with SWSAP1; involved in homologous recombination repair. Interacts with HELQ. Phosphorylated on tyrosine residues by BCR-ABL. Expressed in a wide range of tissues.

It localises to the nucleus. Functionally, involved in the homologous recombination repair (HRR) pathway of double-stranded DNA breaks arising during DNA replication or induced by DNA-damaging agents. May promote the assembly of presynaptic RAD51 nucleoprotein filaments. Binds single-stranded DNA and double-stranded DNA and has DNA-dependent ATPase activity. Part of the RAD51 paralog protein complex BCDX2 which acts in the BRCA1-BRCA2-dependent HR pathway. Upon DNA damage, BCDX2 acts downstream of BRCA2 recruitment and upstream of RAD51 recruitment. BCDX2 binds predominantly to the intersection of the four duplex arms of the Holliday junction and to junction of replication forks. The BCDX2 complex was originally reported to bind single-stranded DNA, single-stranded gaps in duplex DNA and specifically to nicks in duplex DNA. The BCDX2 subcomplex RAD51B:RAD51C exhibits single-stranded DNA-dependent ATPase activity suggesting an involvement in early stages of the HR pathway. The sequence is that of DNA repair protein RAD51 homolog 2 (Rad51b) from Mus musculus (Mouse).